A 279-amino-acid chain; its full sequence is Pantothenate synthetase (279 aa).

26–33 is an ATP binding site; the sequence is MGNLHEGH. His33 functions as the Proton donor in the catalytic mechanism. Position 57 (Gln57) interacts with (R)-pantoate. Gln57 is a binding site for beta-alanine. 144–147 lines the ATP pocket; that stretch reads GKKD. Gln150 is a (R)-pantoate binding site. ATP is bound by residues Val173 and 181 to 184; that span reads LSSR.

The protein belongs to the pantothenate synthetase family. As to quaternary structure, homodimer.

It localises to the cytoplasm. It carries out the reaction (R)-pantoate + beta-alanine + ATP = (R)-pantothenate + AMP + diphosphate + H(+). It functions in the pathway cofactor biosynthesis; (R)-pantothenate biosynthesis; (R)-pantothenate from (R)-pantoate and beta-alanine: step 1/1. Catalyzes the condensation of pantoate with beta-alanine in an ATP-dependent reaction via a pantoyl-adenylate intermediate. In Burkholderia cenocepacia (strain HI2424), this protein is Pantothenate synthetase.